Reading from the N-terminus, the 251-residue chain is Imidazole glycerol phosphate synthase subunit HisF (251 aa).

Catalysis depends on residues Asp11 and Asp130.

This sequence belongs to the HisA/HisF family. Heterodimer of HisH and HisF.

It localises to the cytoplasm. The catalysed reaction is 5-[(5-phospho-1-deoxy-D-ribulos-1-ylimino)methylamino]-1-(5-phospho-beta-D-ribosyl)imidazole-4-carboxamide + L-glutamine = D-erythro-1-(imidazol-4-yl)glycerol 3-phosphate + 5-amino-1-(5-phospho-beta-D-ribosyl)imidazole-4-carboxamide + L-glutamate + H(+). It functions in the pathway amino-acid biosynthesis; L-histidine biosynthesis; L-histidine from 5-phospho-alpha-D-ribose 1-diphosphate: step 5/9. Its function is as follows. IGPS catalyzes the conversion of PRFAR and glutamine to IGP, AICAR and glutamate. The HisF subunit catalyzes the cyclization activity that produces IGP and AICAR from PRFAR using the ammonia provided by the HisH subunit. In Listeria welshimeri serovar 6b (strain ATCC 35897 / DSM 20650 / CCUG 15529 / CIP 8149 / NCTC 11857 / SLCC 5334 / V8), this protein is Imidazole glycerol phosphate synthase subunit HisF.